The chain runs to 122 residues: Large ribosomal subunit protein uL14 (122 aa).

It belongs to the universal ribosomal protein uL14 family. As to quaternary structure, part of the 50S ribosomal subunit. Forms a cluster with proteins L3 and L19. In the 70S ribosome, L14 and L19 interact and together make contacts with the 16S rRNA in bridges B5 and B8.

Binds to 23S rRNA. Forms part of two intersubunit bridges in the 70S ribosome. The chain is Large ribosomal subunit protein uL14 from Bordetella parapertussis (strain 12822 / ATCC BAA-587 / NCTC 13253).